Reading from the N-terminus, the 125-residue chain is Cu-Zn superoxide dismutase-like protein OPG175 (125 aa).

An intrachain disulfide couples Cys-52 to Cys-102.

The protein belongs to the Cu-Zn superoxide dismutase family.

It is found in the virion. The protein resides in the host cytoplasm. Functionally, superoxide dismutase-like protein with no enzymatic activity. The sequence is that of Cu-Zn superoxide dismutase-like protein OPG175 (OPG175) from Monkeypox virus.